The primary structure comprises 432 residues: Asparagine--tRNA ligase (432 aa).

The protein belongs to the class-II aminoacyl-tRNA synthetase family. As to quaternary structure, homodimer.

It localises to the cytoplasm. It carries out the reaction tRNA(Asn) + L-asparagine + ATP = L-asparaginyl-tRNA(Asn) + AMP + diphosphate + H(+). This chain is Asparagine--tRNA ligase, found in Lactobacillus gasseri (strain ATCC 33323 / DSM 20243 / BCRC 14619 / CIP 102991 / JCM 1131 / KCTC 3163 / NCIMB 11718 / NCTC 13722 / AM63).